The following is a 570-amino-acid chain: MGLPWCLMSLFFCGILQSHASERCDDWGLDTMRQIQVFEDEPARIKCPLFEHFLKYNYSTAHSSGLTLIWYWTRQDRDLEEPINFRLPENRISKEKDVLWFRPTLLNDTGNYTCMLRNTTYCSKVAFPLEVVQKDSCFNSPMRLPVHRLYIEQGIHNITCPNVDGYFPSSVKPSVTWYKGCTEIVNFHNVQPKGMNLSFFIPLVSNNGNYTCVVTYLENGRLFHLTRTMTVKVVGSPKDAVPPHIYSPNDRVVYEKEPGEELVIPCKVYFSFIMDSHNEIWWTIDGKKPDDVPVDITIIESVSYSSTEDETRTQILSIKKVTPEDLKRNYVCHARNAEGEAEQAAKVKQKVIPPRYTVELACGFGATVFLVVVLIVVYHVYWLEMVLFYRAHFGTDETILDGKEYDIYVSYARNAEEEEFVLLTLRGVLENEFGYKLCIFDRDSFPGGIVTDETLSFIQKSRRLLVVLSPNYVLQGTQALLELKAGLENMASRGNINVILVQYKAVKDLKVKELKRAKSVLTVIKWKGEKSKYPQGRFWKQLQVAMPVKKSPRWSSSDKQGLSYSSLKNV.

An N-terminal signal peptide occupies residues 1-20 (MGLPWCLMSLFFCGILQSHA). 3 Ig-like C2-type domains span residues 21–128 (SERC…VAFP), 141–230 (PMRL…RTMT), and 243–348 (PHIY…AKVK). Residues 21-367 (SERCDDWGLD…VELACGFGAT (347 aa)) lie on the Extracellular side of the membrane. 5 disulfide bridges follow: Cys-24–Cys-122, Cys-47–Cys-114, Cys-137–Cys-181, Cys-160–Cys-212, and Cys-266–Cys-332. The N-linked (GlcNAc...) asparagine glycan is linked to Asn-57. Positions 69 to 85 (IWYWTRQDRDLEEPINF) are essential for interaction with PTPRD. 6 N-linked (GlcNAc...) asparagine glycosylation sites follow: Asn-107, Asn-111, Asn-118, Asn-157, Asn-196, and Asn-209. A helical membrane pass occupies residues 368–388 (VFLVVVLIVVYHVYWLEMVLF). Topologically, residues 389–570 (YRAHFGTDET…GLSYSSLKNV (182 aa)) are cytoplasmic. In terms of domain architecture, TIR spans 403–546 (KEYDIYVSYA…RFWKQLQVAM (144 aa)). The active site involves Glu-482. A disordered region spans residues 550-570 (KSPRWSSSDKQGLSYSSLKNV). Residues 553-570 (RWSSSDKQGLSYSSLKNV) show a composition bias toward polar residues. Position 557 is a phosphoserine (Ser-557).

This sequence belongs to the interleukin-1 receptor family. In terms of assembly, the interleukin-36 receptor complex is a heterodimer of IL1RL2 and IL1RAP; the association is inhibited by IL36RN. The interleukin-1 receptor complex is a heterodimer of IL1R1 and IL1RAP. Associates with IL1R2 to form a non-signaling interleukin-1 receptor complex. Interacts with IL-33-bound IL1RL1 to form the minimal interleukin-33 signaling complex with a 1:1:1 stoichiometry. Interacts with KIT (independently of stimulation with KITLG/SCF). A mast cell-specific KITLG/SCF-induced interleukin-33 signaling complex contains IL1RL1, IL1RAP, KIT and MYD88. Interacts (via the first immunoglobilin domain) with PTPRD (via the third immunoglobilin domain); induces pre- and postsynaptic differentiation of neurons. In terms of tissue distribution, highly expressed in hypothalamus, in the dentate gyrus of hippocampus, cerebral cortex, cerebellum, liver and lung.

The protein resides in the membrane. The catalysed reaction is NAD(+) + H2O = ADP-D-ribose + nicotinamide + H(+). Functionally, coreceptor for IL1RL2 in the IL-36 signaling system. Coreceptor with IL1R1 in the IL-1 signaling system. Associates with IL1R1 bound to IL1B to form the high affinity interleukin-1 receptor complex which mediates interleukin-1-dependent activation of NF-kappa-B and other pathways. Signaling involves the recruitment of adapter molecules such as TOLLIP, MYD88, and IRAK1 or IRAK2 via the respective TIR domains of the receptor/coreceptor subunits. Recruits TOLLIP to the signaling complex. Does not bind to interleukin-1 alone; binding of IL1RN to IL1R1, prevents its association with IL1R1 to form a signaling complex. The cellular response is modulated through a non-signaling association with the membrane IL1R2 decoy receptor. Coreceptor for IL1RL1 in the IL-33 signaling system. Can bidirectionally induce pre- and postsynaptic differentiation of neurons by trans-synaptically binding to PTPRD. May play a role in IL1B-mediated costimulation of IFNG production from T-helper 1 (Th1) cells. In Rattus norvegicus (Rat), this protein is Interleukin-1 receptor accessory protein (Il1rap).